Consider the following 615-residue polypeptide: Elongation factor 4 (615 aa).

One can recognise a tr-type G domain in the interval 17–198 (ASIRNFCIIA…RVSRTIPAPV (182 aa)). GTP contacts are provided by residues 29-34 (DHGKST) and 145-148 (NKID).

Belongs to the TRAFAC class translation factor GTPase superfamily. Classic translation factor GTPase family. LepA subfamily.

It localises to the cell membrane. The enzyme catalyses GTP + H2O = GDP + phosphate + H(+). Required for accurate and efficient protein synthesis under certain stress conditions. May act as a fidelity factor of the translation reaction, by catalyzing a one-codon backward translocation of tRNAs on improperly translocated ribosomes. Back-translocation proceeds from a post-translocation (POST) complex to a pre-translocation (PRE) complex, thus giving elongation factor G a second chance to translocate the tRNAs correctly. Binds to ribosomes in a GTP-dependent manner. The sequence is that of Elongation factor 4 from Clavibacter sepedonicus (Clavibacter michiganensis subsp. sepedonicus).